The following is a 157-amino-acid chain: Trafficking protein particle complex subunit 6b (157 aa).

This sequence belongs to the TRAPP small subunits family. BET3 subfamily. As to quaternary structure, homodimer. Part of a TRAPP complex.

The protein localises to the golgi apparatus. It is found in the cis-Golgi network. Its subcellular location is the endoplasmic reticulum. Functionally, component of a transport protein particle (TRAPP) complex that may function in specific stages of inter-organelle traffic. Specifically involved in the early development of neural circuitry, likely by controlling the frequency and amplitude of intracellular calcium transients implicated in the regulation of neuron differentiation and survival. The sequence is that of Trafficking protein particle complex subunit 6b from Danio rerio (Zebrafish).